Reading from the N-terminus, the 188-residue chain is Elongation factor P-like protein (188 aa).

The protein belongs to the elongation factor P family.

The sequence is that of Elongation factor P-like protein from Xylella fastidiosa (strain M23).